The following is a 4486-amino-acid chain: Dynein axonemal heavy chain 9 (4486 aa).

Residues Met-1–Leu-1831 form a stem region. Coiled coils occupy residues Asp-381–Asp-410, Gln-504–Ile-529, Ala-639–Leu-662, Thr-752–Thr-823, and Asn-1326–Ala-1355. AAA stretches follow at residues Tyr-1832–Val-2053, Ala-2113–Lys-2334, Glu-2440–Gly-2688, and Asn-2787–Tyr-3036. ATP contacts are provided by residues Gly-1870–Thr-1877, Gly-2151–Ser-2158, Gly-2478–Ser-2485, and Gly-2825–Gln-2832. 3 coiled-coil regions span residues Tyr-3051–Glu-3154, Lys-3285–Thr-3341, and Leu-3640–Tyr-3675. The stalk stretch occupies residues Tyr-3051–Thr-3341. AAA stretches follow at residues Leu-3429–Lys-3656 and Leu-3866–Asn-4092.

This sequence belongs to the dynein heavy chain family. As to quaternary structure, consists of at least two heavy chains and a number of intermediate and light chains. Interacts with ODAD1. Expressed in upper and lower respiratory airway epithelia (at protein level). Not detected in spermatozoa (at protein level).

Its subcellular location is the cytoplasm. It is found in the cytoskeleton. The protein resides in the cilium axoneme. In terms of biological role, force generating protein required for cilia beating in respiratory epithelia. Produces force towards the minus ends of microtubules. Dynein has ATPase activity; the force-producing power stroke is thought to occur on release of ADP. In Homo sapiens (Human), this protein is Dynein axonemal heavy chain 9.